The chain runs to 26 residues: Aralin B chain (26 aa).

As to quaternary structure, disulfide-linked dimer of A and B chains. Glycosylated. High-mannose type oligosaccharides.

Functionally, lectin specific for galactose (Gal) and its derivatives. Induces apoptosis. Has cytotoxic activity against several human cancer cell lines. Is less cytotoxic to normal human cells. This chain is Aralin B chain, found in Aralia elata (Japanese angelica tree).